A 226-amino-acid polypeptide reads, in one-letter code: Phospholipase Culp4 (226 aa).

An N-terminal signal peptide occupies residues 1 to 45; sequence MIPRPQPHSGRWRAGAARRLTSLVAAAFAAATLLLTPALAPPASA. Cysteine 47 and cysteine 117 are disulfide-bonded. Serine 128 serves as the catalytic Nucleophile. A disulfide bond links cysteine 191 and cysteine 198. The active site involves aspartate 195. Histidine 207 functions as the Proton donor/acceptor in the catalytic mechanism.

It belongs to the cutinase family. Homodimer.

It localises to the cell membrane. The protein localises to the secreted. The protein resides in the cell wall. It carries out the reaction 1,2-dihexadecanoyl-sn-glycero-3-phosphocholine + H2O = 1-hexadecanoyl-sn-glycero-3-phosphocholine + hexadecanoate + H(+). The enzyme catalyses a butanoate ester + H2O = an aliphatic alcohol + butanoate + H(+). Inhibited by high concentrations of paraoxon. Inhibited by tetrahydrolipstatin (THL), a specific lipase inhibitor. Functionally, A2-type phospholipase, which is probably involved in the degradation of macrophage membrane. Hydrolyzes dipalmitoylphosphatidylcholine. Also shows moderate esterase activity and hydrolyzes the p-nitrophenol-linked aliphatic ester pNP-butyrate (C4). Does not exhibit cutinase activity. The chain is Phospholipase Culp4 from Mycobacterium tuberculosis (strain ATCC 25618 / H37Rv).